Here is a 345-residue protein sequence, read N- to C-terminus: 2-oxoglutarate-dependent ethylene/succinate-forming enzyme (345 aa).

The 122-residue stretch at 167-288 folds into the Fe2OG dioxygenase domain; the sequence is GWHHMRVLRF…RFAMAYFHEP (122 aa). 2 residues coordinate Fe cation: histidine 191 and histidine 270.

Belongs to the iron/ascorbate-dependent oxidoreductase family. Monomer. Requires Fe(2+) as cofactor.

The enzyme catalyses 2-oxoglutarate + O2 + 2 H(+) = ethene + 3 CO2 + H2O. It catalyses the reaction L-arginine + 2-oxoglutarate + O2 = guanidine + L-glutamate 5-semialdehyde + succinate + CO2. It functions in the pathway alkene biosynthesis; ethylene biosynthesis via 2-oxoglutarate. Simultaneously catalyzes two reactions, namely formation of ethylene and of succinate from 2-oxoglutarate. The sequence is that of 2-oxoglutarate-dependent ethylene/succinate-forming enzyme (efe) from Ralstonia nicotianae (strain ATCC BAA-1114 / GMI1000) (Ralstonia solanacearum).